The sequence spans 365 residues: tRNA 2-selenouridine synthase (365 aa).

The 124-residue stretch at 15 to 138 (LVSDHPIMDA…MRQFLIETID (124 aa)) folds into the Rhodanese domain. Residue Cys-98 is the S-selanylcysteine intermediate of the active site.

The protein belongs to the SelU family. Monomer.

It carries out the reaction 5-methylaminomethyl-2-thiouridine(34) in tRNA + selenophosphate + (2E)-geranyl diphosphate + H2O + H(+) = 5-methylaminomethyl-2-selenouridine(34) in tRNA + (2E)-thiogeraniol + phosphate + diphosphate. The catalysed reaction is 5-methylaminomethyl-2-thiouridine(34) in tRNA + (2E)-geranyl diphosphate = 5-methylaminomethyl-S-(2E)-geranyl-thiouridine(34) in tRNA + diphosphate. It catalyses the reaction 5-methylaminomethyl-S-(2E)-geranyl-thiouridine(34) in tRNA + selenophosphate + H(+) = 5-methylaminomethyl-2-(Se-phospho)selenouridine(34) in tRNA + (2E)-thiogeraniol. The enzyme catalyses 5-methylaminomethyl-2-(Se-phospho)selenouridine(34) in tRNA + H2O = 5-methylaminomethyl-2-selenouridine(34) in tRNA + phosphate. Its function is as follows. Involved in the post-transcriptional modification of the uridine at the wobble position (U34) of tRNA(Lys), tRNA(Glu) and tRNA(Gln). Catalyzes the conversion of 2-thiouridine (S2U-RNA) to 2-selenouridine (Se2U-RNA). Acts in a two-step process involving geranylation of 2-thiouridine (S2U) to S-geranyl-2-thiouridine (geS2U) and subsequent selenation of the latter derivative to 2-selenouridine (Se2U) in the tRNA chain. The sequence is that of tRNA 2-selenouridine synthase from Shewanella piezotolerans (strain WP3 / JCM 13877).